The following is a 355-amino-acid chain: Nicotinate-nucleotide--dimethylbenzimidazole phosphoribosyltransferase (355 aa).

The active-site Proton acceptor is glutamate 321.

This sequence belongs to the CobT family.

It catalyses the reaction 5,6-dimethylbenzimidazole + nicotinate beta-D-ribonucleotide = alpha-ribazole 5'-phosphate + nicotinate + H(+). It functions in the pathway nucleoside biosynthesis; alpha-ribazole biosynthesis; alpha-ribazole from 5,6-dimethylbenzimidazole: step 1/2. Catalyzes the synthesis of alpha-ribazole-5'-phosphate from nicotinate mononucleotide (NAMN) and 5,6-dimethylbenzimidazole (DMB). This chain is Nicotinate-nucleotide--dimethylbenzimidazole phosphoribosyltransferase, found in Desulfotalea psychrophila (strain LSv54 / DSM 12343).